The primary structure comprises 153 residues: Aspartate carbamoyltransferase regulatory chain (153 aa).

Cysteine 108, cysteine 113, cysteine 137, and cysteine 140 together coordinate Zn(2+).

The protein belongs to the PyrI family. Contains catalytic and regulatory chains. It depends on Zn(2+) as a cofactor.

Its function is as follows. Involved in allosteric regulation of aspartate carbamoyltransferase. The chain is Aspartate carbamoyltransferase regulatory chain from Methanosphaera stadtmanae (strain ATCC 43021 / DSM 3091 / JCM 11832 / MCB-3).